The following is a 380-amino-acid chain: Tetraacyldisaccharide 4'-kinase (380 aa).

51–58 (SVGGTGKT) contacts ATP.

Belongs to the LpxK family.

It catalyses the reaction a lipid A disaccharide + ATP = a lipid IVA + ADP + H(+). The protein operates within glycolipid biosynthesis; lipid IV(A) biosynthesis; lipid IV(A) from (3R)-3-hydroxytetradecanoyl-[acyl-carrier-protein] and UDP-N-acetyl-alpha-D-glucosamine: step 6/6. In terms of biological role, transfers the gamma-phosphate of ATP to the 4'-position of a tetraacyldisaccharide 1-phosphate intermediate (termed DS-1-P) to form tetraacyldisaccharide 1,4'-bis-phosphate (lipid IVA). The sequence is that of Tetraacyldisaccharide 4'-kinase from Bacteroides thetaiotaomicron (strain ATCC 29148 / DSM 2079 / JCM 5827 / CCUG 10774 / NCTC 10582 / VPI-5482 / E50).